Reading from the N-terminus, the 319-residue chain is MNSLLQALHLLRCDLLSLPIGDAQTRSAELTALLRFGADLNIIKRRVVIEVKLCGSLLLNRVESVLRNIYGITPKLIRSTPRNDIGESCFLLRIDDPSLARKLGLIDTSLAPVRGLPNHLALASGSALKGLVRGAILASGVFTESTRKFAMEVYAPSNETALCLQGSINKLNVIAKIKEVRGSYKVVIRDIDNVAPLLRNVGARNSVEKIEQFIKLRHPENLGPRLPNFDDANLRRSAIAAASSVRRIERALQILKGDAPQHLLYAGQLRLNNTHASLEELGKLAEPAMTKDAIAGRIRRLLCLADKRAKTLGIPDTFS.

A DNA-binding region (H-T-H motif) is located at residues 277-310; it reads SLEELGKLAEPAMTKDAIAGRIRRLLCLADKRAK.

This sequence belongs to the WhiA family.

Involved in cell division and chromosome segregation. This chain is Probable cell division protein WhiA, found in Tropheryma whipplei (strain Twist) (Whipple's bacillus).